We begin with the raw amino-acid sequence, 358 residues long: tRNA-specific 2-thiouridylase MnmA (358 aa).

ATP-binding positions include 6-13 (LVSGGVDS) and isoleucine 32. The segment at 93 to 95 (NPD) is interaction with target base in tRNA. The Nucleophile role is filled by cysteine 98. Cysteine 98 and cysteine 193 form a disulfide bridge. Glycine 121 contributes to the ATP binding site. The interval 143–145 (KDQ) is interaction with tRNA. The Cysteine persulfide intermediate role is filled by cysteine 193.

Belongs to the MnmA/TRMU family.

It is found in the cytoplasm. The catalysed reaction is S-sulfanyl-L-cysteinyl-[protein] + uridine(34) in tRNA + AH2 + ATP = 2-thiouridine(34) in tRNA + L-cysteinyl-[protein] + A + AMP + diphosphate + H(+). Catalyzes the 2-thiolation of uridine at the wobble position (U34) of tRNA, leading to the formation of s(2)U34. In Parabacteroides distasonis (strain ATCC 8503 / DSM 20701 / CIP 104284 / JCM 5825 / NCTC 11152), this protein is tRNA-specific 2-thiouridylase MnmA.